A 146-amino-acid chain; its full sequence is Linear conopeptide (146 aa).

The N-terminal stretch at 1–19 (MLRLIIAAAVLVSACLAYP) is a signal peptide. A propeptide spanning residues 20 to 34 (QRREGAPADAANLQS) is cleaved from the precursor. Met-40 is subject to Methionine sulfoxide; partial; in Cn2. Propeptides lie at residues 58 to 80 (FLPFNPNLQMGYKRDFDENLEKR) and 104 to 146 (FLHN…DKEQ). Residues 107-146 (NEKGDKHPFANVDSADTDLGQFEPSAENKNGEFRFFDKEQ) form a disordered region. Residues 135 to 146 (KNGEFRFFDKEQ) show a composition bias toward basic and acidic residues.

Expressed by the venom duct.

The protein localises to the secreted. This chain is Linear conopeptide, found in Conus consors (Singed cone).